Reading from the N-terminus, the 491-residue chain is Glutamyl-tRNA(Gln) amidotransferase subunit A (491 aa).

Residues lysine 77 and serine 152 each act as charge relay system in the active site. The active-site Acyl-ester intermediate is the serine 176.

The protein belongs to the amidase family. GatA subfamily. As to quaternary structure, heterotrimer of A, B and C subunits.

The catalysed reaction is L-glutamyl-tRNA(Gln) + L-glutamine + ATP + H2O = L-glutaminyl-tRNA(Gln) + L-glutamate + ADP + phosphate + H(+). In terms of biological role, allows the formation of correctly charged Gln-tRNA(Gln) through the transamidation of misacylated Glu-tRNA(Gln) in organisms which lack glutaminyl-tRNA synthetase. The reaction takes place in the presence of glutamine and ATP through an activated gamma-phospho-Glu-tRNA(Gln). The protein is Glutamyl-tRNA(Gln) amidotransferase subunit A of Chlamydia trachomatis serovar L2 (strain ATCC VR-902B / DSM 19102 / 434/Bu).